The sequence spans 395 residues: uncharacterized protein (395 aa).

A coiled-coil region spans residues 288–318; that stretch reads VAKGKEIDNAEIEKTIKEYENIEEGIEDIVK.

This is an uncharacterized protein from Ostreid herpesvirus 1 (isolate France) (OsHV-1).